The chain runs to 206 residues: LexA repressor (206 aa).

Residues 27 to 47 (YEEIRQNLGFRSLNAVFKHLK) constitute a DNA-binding region (H-T-H motif). Active-site for autocatalytic cleavage activity residues include Ser120 and Lys157.

This sequence belongs to the peptidase S24 family. As to quaternary structure, homodimer.

The catalysed reaction is Hydrolysis of Ala-|-Gly bond in repressor LexA.. In terms of biological role, represses a number of genes involved in the response to DNA damage (SOS response), including recA and lexA. In the presence of single-stranded DNA, RecA interacts with LexA causing an autocatalytic cleavage which disrupts the DNA-binding part of LexA, leading to derepression of the SOS regulon and eventually DNA repair. This is LexA repressor from Syntrophobacter fumaroxidans (strain DSM 10017 / MPOB).